A 597-amino-acid chain; its full sequence is Tubulin polyglutamylase ttll-4 (597 aa).

The span at 1–18 (MSSGYSSAPSVSHTSSEA) shows a compositional bias: polar residues. Disordered stretches follow at residues 1-39 (MSSG…DEQR) and 80-107 (SKSK…FLKS). Over residues 26–35 (YEDGVDEEAS) the composition is skewed to acidic residues. Residues 134–472 (QSRLTWCHNS…HVPPSFDKLH (339 aa)) form the TTL domain. Residues K250, 256–257 (RG), 278–281 (QHYI), and 291–293 (KFD) contribute to the ATP site. R256 lines the a protein pocket. R317 serves as a coordination point for L-glutamate. Residue 338-339 (TN) participates in ATP binding. 3 residues coordinate L-glutamate: Y340, S341, and K358. Positions 418, 431, and 433 each coordinate Mg(2+). K449 provides a ligand contact to L-glutamate.

This sequence belongs to the tubulin--tyrosine ligase family. Requires Mg(2+) as cofactor.

The enzyme catalyses L-glutamyl-[protein] + L-glutamate + ATP = gamma-L-glutamyl-L-glutamyl-[protein] + ADP + phosphate + H(+). In terms of biological role, monoglutamylase which modifies tubulin, adding a single glutamate on the gamma-carboxyl group of specific glutamate residues of target proteins. Involved in the side-chain initiation step of the polyglutamylation reaction but not in the elongation step. Preferentially modifies beta-tail tubulin over the alpha-tubulin. Involved in side-chain glutamylation of tubulin in sensory cilia. Together with ttll-5 and ttll-11, required for male mating. The sequence is that of Tubulin polyglutamylase ttll-4 (ttll-4) from Caenorhabditis briggsae.